Here is a 131-residue protein sequence, read N- to C-terminus: ATP synthase epsilon chain, chloroplastic (131 aa).

This sequence belongs to the ATPase epsilon chain family. As to quaternary structure, F-type ATPases have 2 components, CF(1) - the catalytic core - and CF(0) - the membrane proton channel. CF(1) has five subunits: alpha(3), beta(3), gamma(1), delta(1), epsilon(1). CF(0) has three main subunits: a, b and c.

Its subcellular location is the plastid. It is found in the chloroplast thylakoid membrane. Functionally, produces ATP from ADP in the presence of a proton gradient across the membrane. The sequence is that of ATP synthase epsilon chain, chloroplastic from Cyanidioschyzon merolae (strain NIES-3377 / 10D) (Unicellular red alga).